Consider the following 353-residue polypeptide: Tsukushi (353 aa).

The signal sequence occupies residues 1–17; sequence MLCTLFLLLLALGIVQT. An LRRNT domain is found at 18–59; that stretch reads TRPCFPGCQCEEETFGLFDSFSLIRVDCSSLGPHIVPVPIPL. LRR repeat units lie at residues 60–80, 86–107, 110–131, 133–154, 160–180, 186–207, 208–228, 231–253, 256–277, and 281–302; these read DTAH…SVLG, TLAG…AFSR, YLES…VFTS, PLSD…AFTT, ALHV…PARA, TIQS…RDLP, LRYL…AFMG, GLTH…GFRE, GLQV…EVFS, and LLQE…LLHH. N75 is a glycosylation site (N-linked (GlcNAc...) asparagine). N138 carries an N-linked (GlcNAc...) asparagine glycan. A glycan (N-linked (GlcNAc...) asparagine) is linked at N191.

As to quaternary structure, interacts with FZD4 (via FZ domain); competes with WNT2B for binding to FZD4, inhibiting Wnt signaling and repressing peripheral eye development. Interacts with TGFB1; the interaction contributes to regulation of the hair cycle. Interacts with netrin. Interacts with CCN2. Expressed at high levels in the liver, small intestine and placenta. Not or barely detectable in other tissues, including whole pancreas, adipose tissues, skeletal muscle, kidney, spleen, brain, lung and testis.

It is found in the secreted. Contributes to various developmental events and other processes such as wound healing and cholesterol homeostasis through its interactions with multiple signaling pathways. Wnt signaling inhibitor which competes with WNT2B for binding to Wnt receptor FZD4 and represses WNT2B-dependent development of the peripheral eye. Plays a role in regulating the hair cycle by controlling TGFB1 signaling. Required for the development of the anterior commissure in the brain by inhibiting neurite outgrowth. Essential for terminal differentiation of hippocampal neural stem cells. Plays a role in regulating bone elongation and bone mass by modulating growth plate chondrocyte function and overall body size. Required for development of the inner ear through its involvement in stereocilia formation in inner hair cells. Facilitates wound healing by inhibiting secretion of TGFB1 from macrophages which prevents myofibroblast differentiation, maintaining inflammatory cell quiescence. Plays a role in cholesterol homeostasis by reducing circulating high-density lipoprotein cholesterol, lowering cholesterol efflux capacity and decreasing cholesterol-to-bile acid conversion in the liver. In one study, shown to negatively regulate sympathetic innervation in brown fat, leading to reduced energy expenditure. In another study, shown not to affect brown fat thermogenic capacity, body weight gain or glucose homeostasis. This chain is Tsukushi (Tsku), found in Rattus norvegicus (Rat).